A 238-amino-acid chain; its full sequence is LexA repressor (238 aa).

The H-T-H motif DNA-binding region spans 26-46 (FDEMKDALDLRSKSGIHRLIT). Residues Ser159 and Lys197 each act as for autocatalytic cleavage activity in the active site.

This sequence belongs to the peptidase S24 family. Homodimer.

It carries out the reaction Hydrolysis of Ala-|-Gly bond in repressor LexA.. Functionally, represses a number of genes involved in the response to DNA damage (SOS response), including recA and lexA. In the presence of single-stranded DNA, RecA interacts with LexA causing an autocatalytic cleavage which disrupts the DNA-binding part of LexA, leading to derepression of the SOS regulon and eventually DNA repair. This Rhodobacter capsulatus (Rhodopseudomonas capsulata) protein is LexA repressor.